Consider the following 541-residue polypeptide: 2-succinyl-5-enolpyruvyl-6-hydroxy-3-cyclohexene-1-carboxylate synthase (541 aa).

Belongs to the TPP enzyme family. MenD subfamily. As to quaternary structure, homodimer. The cofactor is Mg(2+). Mn(2+) serves as cofactor. It depends on thiamine diphosphate as a cofactor.

It carries out the reaction isochorismate + 2-oxoglutarate + H(+) = 5-enolpyruvoyl-6-hydroxy-2-succinyl-cyclohex-3-ene-1-carboxylate + CO2. Its pathway is quinol/quinone metabolism; 1,4-dihydroxy-2-naphthoate biosynthesis; 1,4-dihydroxy-2-naphthoate from chorismate: step 2/7. It functions in the pathway quinol/quinone metabolism; menaquinone biosynthesis. In terms of biological role, catalyzes the thiamine diphosphate-dependent decarboxylation of 2-oxoglutarate and the subsequent addition of the resulting succinic semialdehyde-thiamine pyrophosphate anion to isochorismate to yield 2-succinyl-5-enolpyruvyl-6-hydroxy-3-cyclohexene-1-carboxylate (SEPHCHC). This is 2-succinyl-5-enolpyruvyl-6-hydroxy-3-cyclohexene-1-carboxylate synthase from Leuconostoc citreum (strain KM20).